Here is a 644-residue protein sequence, read N- to C-terminus: 3-isopropylmalate dehydratase (644 aa).

[4Fe-4S] cluster is bound by residues C400, C460, and C463. Positions 521 to 568 (SEIPGTPKQSPRQEVVAEFESEEDDVDSSSVDSAPVATPPSTGDSAGM) are disordered. The span at 537-547 (AEFESEEDDVD) shows a compositional bias: acidic residues.

Belongs to the aconitase/IPM isomerase family. In terms of assembly, monomer. It depends on [4Fe-4S] cluster as a cofactor.

It carries out the reaction (2R,3S)-3-isopropylmalate = (2S)-2-isopropylmalate. The protein operates within amino-acid biosynthesis; L-leucine biosynthesis; L-leucine from 3-methyl-2-oxobutanoate: step 2/4. Catalyzes the isomerization between 2-isopropylmalate and 3-isopropylmalate, via the formation of 2-isopropylmaleate. This chain is 3-isopropylmalate dehydratase (LEUA), found in Mucor circinelloides f. lusitanicus (Mucor racemosus var. lusitanicus).